Consider the following 61-residue polypeptide: Photosystem II reaction center protein K (61 aa).

Residues methionine 1–glycine 24 constitute a propeptide that is removed on maturation. The chain crosses the membrane as a helical span at residues isoleucine 36–alanine 56.

Belongs to the PsbK family. As to quaternary structure, PSII is composed of 1 copy each of membrane proteins PsbA, PsbB, PsbC, PsbD, PsbE, PsbF, PsbH, PsbI, PsbJ, PsbK, PsbL, PsbM, PsbT, PsbX, PsbY, PsbZ, Psb30/Ycf12, at least 3 peripheral proteins of the oxygen-evolving complex and a large number of cofactors. It forms dimeric complexes.

Its subcellular location is the plastid. It is found in the chloroplast thylakoid membrane. One of the components of the core complex of photosystem II (PSII). PSII is a light-driven water:plastoquinone oxidoreductase that uses light energy to abstract electrons from H(2)O, generating O(2) and a proton gradient subsequently used for ATP formation. It consists of a core antenna complex that captures photons, and an electron transfer chain that converts photonic excitation into a charge separation. The chain is Photosystem II reaction center protein K from Coffea arabica (Arabian coffee).